Reading from the N-terminus, the 436-residue chain is GTPase Der (436 aa).

EngA-type G domains follow at residues Pro-4 to Glu-167 and Ile-175 to Asn-351. Residues Gly-10–Ser-17, Asp-57–Ile-61, Asn-119–Asp-122, Gly-181–Ser-188, Asp-229–Met-233, and Asn-294–Asp-297 each bind GTP. The region spanning Lys-352–Lys-436 is the KH-like domain.

Belongs to the TRAFAC class TrmE-Era-EngA-EngB-Septin-like GTPase superfamily. EngA (Der) GTPase family. In terms of assembly, associates with the 50S ribosomal subunit.

In terms of biological role, GTPase that plays an essential role in the late steps of ribosome biogenesis. The chain is GTPase Der from Streptococcus pyogenes serotype M3 (strain ATCC BAA-595 / MGAS315).